Reading from the N-terminus, the 637-residue chain is Phosphomethylpyrimidine synthase (637 aa).

Substrate contacts are provided by residues asparagine 242, methionine 271, tyrosine 300, histidine 336, 356–358, 397–400, and glutamate 436; these read SRG and DGLR. Zn(2+) is bound at residue histidine 440. Position 463 (tyrosine 463) interacts with substrate. Residue histidine 504 coordinates Zn(2+). [4Fe-4S] cluster-binding residues include cysteine 584, cysteine 587, and cysteine 592.

Belongs to the ThiC family. As to quaternary structure, homodimer. It depends on [4Fe-4S] cluster as a cofactor.

The enzyme catalyses 5-amino-1-(5-phospho-beta-D-ribosyl)imidazole + S-adenosyl-L-methionine = 4-amino-2-methyl-5-(phosphooxymethyl)pyrimidine + CO + 5'-deoxyadenosine + formate + L-methionine + 3 H(+). Its pathway is cofactor biosynthesis; thiamine diphosphate biosynthesis. Functionally, catalyzes the synthesis of the hydroxymethylpyrimidine phosphate (HMP-P) moiety of thiamine from aminoimidazole ribotide (AIR) in a radical S-adenosyl-L-methionine (SAM)-dependent reaction. The sequence is that of Phosphomethylpyrimidine synthase from Bordetella avium (strain 197N).